Here is a 215-residue protein sequence, read N- to C-terminus: Beta-crystallin A3 (215 aa).

N-acetylmethionine is present on Met1. Residues 1–24 (METQTVQQELESLPTTKMAQTNPM) form a disordered region. Residues 1-30 (METQTVQQELESLPTTKMAQTNPMPGSVGP) form an N-terminal arm region. An N-acetylalanine modification is found at Glu2. Beta/gamma crystallin 'Greek key' domains lie at 31–70 (WKIT…KVEC) and 71–117 (GAWV…RPIC). 2 positions are modified to S-glutathionyl cysteine; alternate: Cys82 and Cys117. S-methylcysteine; alternate occurs at positions 82 and 117. Residues 118–123 (SANHKE) are connecting peptide. 2 Beta/gamma crystallin 'Greek key' domains span residues 124 to 165 (SKIT…KIQC) and 166 to 214 (GAWV…RRIQ).

The protein belongs to the beta/gamma-crystallin family. In terms of assembly, homo/heterodimer, or complexes of higher-order. The structure of beta-crystallin oligomers seems to be stabilized through interactions between the N-terminal arms. Interacts with CRYBA1. Post-translationally, specific cleavages in the N-terminal arm occur during lens maturation and give rise to several truncated forms. Isoform A1 contains a N-acetylalanine at position 2.

Functionally, crystallins are the dominant structural components of the vertebrate eye lens. In Bos taurus (Bovine), this protein is Beta-crystallin A3.